The primary structure comprises 889 residues: Cytoplasmic aconitate hydratase (889 aa).

Substrate is bound by residues Gln-86 and 205–207 (DSH). [4Fe-4S] cluster contacts are provided by Cys-437, Cys-503, and Cys-506. Substrate-binding positions include Arg-536, Arg-541, Arg-699, and 779–780 (SR).

This sequence belongs to the aconitase/IPM isomerase family. Requires [4Fe-4S] cluster as cofactor.

Its subcellular location is the cytoplasm. The protein localises to the cytosol. The enzyme catalyses citrate = D-threo-isocitrate. Its function is as follows. Bifunctional iron sensor that switches between 2 activities depending on iron availability. Iron deprivation, promotes its mRNA binding activity through which it regulates the expression of genes involved in iron uptake, sequestration and utilization. Binds to iron-responsive elements (IRES) in the untranslated region of target mRNAs preventing for instance the translation of ferritin and aminolevulinic acid synthase and stabilizing the transferrin receptor mRNA. In terms of biological role, conversely, when cellular iron levels are high, binds a 4Fe-4S cluster which precludes RNA binding activity and promotes the aconitase activity, the isomerization of citrate to isocitrate via cis-aconitate. In Gallus gallus (Chicken), this protein is Cytoplasmic aconitate hydratase (ACO1).